Here is a 1192-residue protein sequence, read N- to C-terminus: Pyruvate carboxylase (1192 aa).

A disordered region spans residues 1-23 (MAAPRQPEEAVDDTEFIDDHHDQ). In terms of domain architecture, Biotin carboxylation spans 40 to 492 (QFQKILVANR…WTTFIDDTPE (453 aa)). ATP contacts are provided by K158, E242, and H277. The ATP-grasp domain maps to 162–359 (RQLAIRCDVP…IVAAQIQIAA (198 aa)). Residue R334 is part of the active site. The 269-residue stretch at 578–846 (CLIMDTTWRD…DPGLNSAQVR (269 aa)) folds into the Pyruvate carboxyltransferase domain. Residues 586–590 (RDAHQ) and R659 contribute to the substrate site. D587 contributes to the a divalent metal cation binding site. Residues K755, H785, and H787 each coordinate a divalent metal cation. Residue K755 is modified to N6-carboxylysine. T920 is a binding site for substrate. Positions 1115-1190 (KAELGDSSQV…DGQDLVCKIV (76 aa)) constitute a Biotinyl-binding domain. K1156 is subject to N6-biotinyllysine.

Biotin serves as cofactor. It depends on Zn(2+) as a cofactor.

It is found in the cytoplasm. It catalyses the reaction hydrogencarbonate + pyruvate + ATP = oxaloacetate + ADP + phosphate + H(+). It functions in the pathway carbohydrate biosynthesis; gluconeogenesis. Pyruvate carboxylase catalyzes a 2-step reaction, involving the ATP-dependent carboxylation of the covalently attached biotin in the first step and the transfer of the carboxyl group to pyruvate in the second. The protein is Pyruvate carboxylase (pyc) of Aspergillus niger.